Consider the following 160-residue polypeptide: 6,7-dimethyl-8-ribityllumazine synthase (160 aa).

5-amino-6-(D-ribitylamino)uracil contacts are provided by residues Trp26, 59–61, and 81–83; these read AVE and VVI. Residue 86–87 participates in (2S)-2-hydroxy-3-oxobutyl phosphate binding; that stretch reads GT. His89 acts as the Proton donor in catalysis. Position 114 (Phe114) interacts with 5-amino-6-(D-ribitylamino)uracil. Arg128 contacts (2S)-2-hydroxy-3-oxobutyl phosphate.

The protein belongs to the DMRL synthase family.

The enzyme catalyses (2S)-2-hydroxy-3-oxobutyl phosphate + 5-amino-6-(D-ribitylamino)uracil = 6,7-dimethyl-8-(1-D-ribityl)lumazine + phosphate + 2 H2O + H(+). It participates in cofactor biosynthesis; riboflavin biosynthesis; riboflavin from 2-hydroxy-3-oxobutyl phosphate and 5-amino-6-(D-ribitylamino)uracil: step 1/2. Catalyzes the formation of 6,7-dimethyl-8-ribityllumazine by condensation of 5-amino-6-(D-ribitylamino)uracil with 3,4-dihydroxy-2-butanone 4-phosphate. This is the penultimate step in the biosynthesis of riboflavin. This Frankia casuarinae (strain DSM 45818 / CECT 9043 / HFP020203 / CcI3) protein is 6,7-dimethyl-8-ribityllumazine synthase.